The primary structure comprises 106 residues: MYAVLVTGGKQYRVAQGETLRVEKLEVEAGNEIKFDTILMLGDSDGIKLGDALKGASVTAKVVAHGRADKVRIIKFRRRKHHMKRQGHRQYYTEIEITGIAGGDKK.

The protein belongs to the bacterial ribosomal protein bL21 family. In terms of assembly, part of the 50S ribosomal subunit. Contacts protein L20.

In terms of biological role, this protein binds to 23S rRNA in the presence of protein L20. The polypeptide is Large ribosomal subunit protein bL21 (Xanthomonas campestris pv. campestris (strain ATCC 33913 / DSM 3586 / NCPPB 528 / LMG 568 / P 25)).